The chain runs to 939 residues: Translation initiation factor IF-2 (939 aa).

Disordered stretches follow at residues 51-81 (LGTK…GGKK) and 137-353 (VTNK…EMKA). Residues 181 to 210 (NEKKAGAPEIKRAEHTETVEKSKTAVDSKK) are compositionally biased toward basic and acidic residues. Low complexity predominate over residues 259–277 (PVNRSPRPSTPSPNRSAGG). A compositionally biased stretch (basic and acidic residues) spans 300–312 (RRDEKPAERDSRP). Residues 437–606 (GRCPVVTVMG…QLAAEMLELK (170 aa)) form the tr-type G domain. Positions 446 to 453 (GHVDHGKT) are G1. 446 to 453 (GHVDHGKT) is a binding site for GTP. Residues 471 to 475 (GITQH) form a G2 region. Residues 492–495 (DTPG) are G3. GTP-binding positions include 492–496 (DTPGH) and 546–549 (NKID). Residues 546-549 (NKID) form a G4 region. Residues 582–584 (SAK) form a G5 region.

Belongs to the TRAFAC class translation factor GTPase superfamily. Classic translation factor GTPase family. IF-2 subfamily.

The protein resides in the cytoplasm. Its function is as follows. One of the essential components for the initiation of protein synthesis. Protects formylmethionyl-tRNA from spontaneous hydrolysis and promotes its binding to the 30S ribosomal subunits. Also involved in the hydrolysis of GTP during the formation of the 70S ribosomal complex. The chain is Translation initiation factor IF-2 from Desulfotalea psychrophila (strain LSv54 / DSM 12343).